Reading from the N-terminus, the 206-residue chain is LexA repressor (206 aa).

The H-T-H motif DNA-binding region spans 28–48 (RAEIATRLGFKSANAAEEHLK). Residues S123 and K160 each act as for autocatalytic cleavage activity in the active site.

It belongs to the peptidase S24 family. In terms of assembly, homodimer.

It catalyses the reaction Hydrolysis of Ala-|-Gly bond in repressor LexA.. Its function is as follows. Represses a number of genes involved in the response to DNA damage (SOS response), including recA and lexA. In the presence of single-stranded DNA, RecA interacts with LexA causing an autocatalytic cleavage which disrupts the DNA-binding part of LexA, leading to derepression of the SOS regulon and eventually DNA repair. In Shewanella oneidensis (strain ATCC 700550 / JCM 31522 / CIP 106686 / LMG 19005 / NCIMB 14063 / MR-1), this protein is LexA repressor.